The following is an 818-amino-acid chain: Exchange factor for Arf-6 (818 aa).

Disordered stretches follow at residues 92 to 123 (AQKL…ESSP), 137 to 168 (MEST…ENDD), 208 to 291 (NHHH…GVSN), and 326 to 383 (RTTP…VGGE). Residues 107–119 (IERRGSLARKTSE) show a composition bias toward basic and acidic residues. The span at 140–149 (TDVEESEEET) shows a compositional bias: acidic residues. Residues 154–165 (TDEKENQKKPNE) show a composition bias toward basic and acidic residues. Composition is skewed to polar residues over residues 213–223 (YNSSPQISTLS) and 255–269 (MSNN…SPEN). The span at 326-347 (RTTPNTAASNSSASASPSLHAT) shows a compositional bias: low complexity. One can recognise an SEC7 domain in the interval 356–532 (GVSLRSAESS…KTLFQSIKDN (177 aa)). Polar residues predominate over residues 361–380 (SAESSNLNQTAVPSTSTNSV). Residues 569–681 (VEYYSGFLMR…WCEKINFVAA (113 aa)) form the PH domain. The span at 782–799 (TMNIMMTPTRRQQQNQKP) shows a compositional bias: polar residues. The interval 782 to 818 (TMNIMMTPTRRQQQNQKPVVSEDRLSYTDAVNGAAAH) is disordered.

In terms of assembly, interacts (via short N-terminal region) with microtubule-associated proteins tac-1 and zyg-8.

The protein resides in the cytoplasm. Its subcellular location is the cell cortex. It is found in the cell membrane. Guanine nucleotide exchange factor for arf-6. Involved in response to injury in mechanosensory neurons. Inhibits axon regrowth via microtubule dynamics, possibly by inducing axonal microtubule catastrophes. Limits microtubule growth near the cellular cortex of early embryonic cells. In Caenorhabditis elegans, this protein is Exchange factor for Arf-6.